Here is a 233-residue protein sequence, read N- to C-terminus: Phosphoglycolate phosphatase (233 aa).

Asp13 acts as the Nucleophile in catalysis. Mg(2+)-binding residues include Asp13, Asp15, and Asp175.

The protein belongs to the HAD-like hydrolase superfamily. CbbY/CbbZ/Gph/YieH family. Requires Mg(2+) as cofactor.

It catalyses the reaction 2-phosphoglycolate + H2O = glycolate + phosphate. Its pathway is organic acid metabolism; glycolate biosynthesis; glycolate from 2-phosphoglycolate: step 1/1. Specifically catalyzes the dephosphorylation of 2-phosphoglycolate. Is involved in the dissimilation of the intracellular 2-phosphoglycolate formed during the DNA repair of 3'-phosphoglycolate ends, a major class of DNA lesions induced by oxidative stress. This is Phosphoglycolate phosphatase from Agrobacterium fabrum (strain C58 / ATCC 33970) (Agrobacterium tumefaciens (strain C58)).